Here is a 271-residue protein sequence, read N- to C-terminus: Tryptophan synthase alpha chain (271 aa).

Catalysis depends on proton acceptor residues Glu-49 and Asp-60.

It belongs to the TrpA family. As to quaternary structure, tetramer of two alpha and two beta chains.

The catalysed reaction is (1S,2R)-1-C-(indol-3-yl)glycerol 3-phosphate + L-serine = D-glyceraldehyde 3-phosphate + L-tryptophan + H2O. It participates in amino-acid biosynthesis; L-tryptophan biosynthesis; L-tryptophan from chorismate: step 5/5. In terms of biological role, the alpha subunit is responsible for the aldol cleavage of indoleglycerol phosphate to indole and glyceraldehyde 3-phosphate. The protein is Tryptophan synthase alpha chain of Azoarcus sp. (strain BH72).